The primary structure comprises 430 residues: FAD-dependent monooxygenase asL4 (430 aa).

FAD contacts are provided by residues 11–14 (GGIA), 33–34 (ER), R108, and Y278.

Belongs to the aromatic-ring hydroxylase family. The cofactor is FAD.

Its pathway is secondary metabolite biosynthesis; terpenoid biosynthesis. In terms of biological role, flavin-dependent monooxygenase; part of the gene cluster that mediates the biosynthesis of xenovulene A, an unusual meroterpenoid that has potent inhibitory effects on the human gamma-aminobutyrate A (GABAA) benzodiazepine receptor. The first step of xenovulene A biosynthesis is the biosynthesis of 3-methylorcinaldehyde performed by the non-reducing polyketide synthase aspks1. The salicylate hydroxylase asL1 then catalyzes the oxidative dearomatization of 3-methylorcinaldehyde to yield a dearomatized hydroxycyclohexadione. The 2-oxoglutarate-dependent dioxygenase asL3 further catalyzes the oxidative ring expansion to provide the first tropolone metabolite. The cytochrome P450 monooxygenase asR2 allows the synthesis of tropolone hemiacetal. In parallel, a previously unrecognised class of terpene cyclase, asR6, produces alpha-humulene from farnesylpyrophosphate (FPP). The putative Diels-Alderase asR5 probably catalyzes the formation of the tropolone-humulene skeleton by linking humulene and the polyketide moiety. Oxidative-ring contractions catalyzed by asL4 and asL6 then processively remove carbon atoms from the polyketide to yield xenovulene A. The polypeptide is FAD-dependent monooxygenase asL4 (Sarocladium schorii (Acremonium strictum (strain IMI 501407))).